The sequence spans 87 residues: NADH-ubiquinone oxidoreductase chain 4L (87 aa).

Helical transmembrane passes span 22–42 and 49–69; these read FLSFLILMEFLVITVLFFIIG and LFLIFLVFSVCELVLGLSLLV.

This sequence belongs to the complex I subunit 4L family.

It is found in the mitochondrion membrane. The catalysed reaction is a ubiquinone + NADH + 5 H(+)(in) = a ubiquinol + NAD(+) + 4 H(+)(out). Functionally, core subunit of the mitochondrial membrane respiratory chain NADH dehydrogenase (Complex I) that is believed to belong to the minimal assembly required for catalysis. Complex I functions in the transfer of electrons from NADH to the respiratory chain. The immediate electron acceptor for the enzyme is believed to be ubiquinone. In Apis mellifera ligustica (Common honeybee), this protein is NADH-ubiquinone oxidoreductase chain 4L (ND4L).